The sequence spans 278 residues: Bifunctional protein FolD (278 aa).

NADP(+) contacts are provided by residues 164 to 166 and Thr-228; that span reads GRS.

Belongs to the tetrahydrofolate dehydrogenase/cyclohydrolase family. In terms of assembly, homodimer.

It catalyses the reaction (6R)-5,10-methylene-5,6,7,8-tetrahydrofolate + NADP(+) = (6R)-5,10-methenyltetrahydrofolate + NADPH. The catalysed reaction is (6R)-5,10-methenyltetrahydrofolate + H2O = (6R)-10-formyltetrahydrofolate + H(+). It participates in one-carbon metabolism; tetrahydrofolate interconversion. Catalyzes the oxidation of 5,10-methylenetetrahydrofolate to 5,10-methenyltetrahydrofolate and then the hydrolysis of 5,10-methenyltetrahydrofolate to 10-formyltetrahydrofolate. This Mycoplasmopsis synoviae (strain 53) (Mycoplasma synoviae) protein is Bifunctional protein FolD.